The chain runs to 571 residues: Streptolysin O (571 aa).

Positions methionine 1 to serine 33 are cleaved as a signal peptide. The disordered stretch occupies residues asparagine 30 to glutamate 108. The span at asparagine 37 to glutamate 48 shows a compositional bias: low complexity. Composition is skewed to basic and acidic residues over residues proline 50 to aspartate 68 and alanine 79 to glutamate 108. 4 beta stranded membrane passes run lysine 260 to isoleucine 273, isoleucine 280 to glutamate 289, serine 358 to alanine 367, and lysine 375 to serine 387. The Conserved undecapeptide signature appears at glutamate 529–arginine 539. Residues threonine 561–leucine 562 carry the Cholesterol binding motif.

It belongs to the cholesterol-dependent cytolysin family. In terms of assembly, homooligomeric pore complex of 35 to 50 subunits; when inserted in the host membrane.

The protein resides in the secreted. Its subcellular location is the host cell membrane. In terms of biological role, a cholesterol-dependent toxin that causes cytolysis by forming pores in cholesterol containing host membranes. After binding to target membranes, the protein undergoes a major conformation change, leading to its insertion in the host membrane and formation of an oligomeric pore complex. Cholesterol is required for binding to host membranes, membrane insertion and pore formation; cholesterol binding is mediated by a Thr-Leu pair in the C-terminus. Can be reversibly inactivated by oxidation. The chain is Streptolysin O (slo) from Streptococcus pyogenes serotype M18 (strain MGAS8232).